The chain runs to 108 residues: MDQFECINVADAHQKLQEKEAVLVDIRDPQSFAMGHAVQAFHLTNDTLGAFMRDNDFDTPVMVMCYHGNSSKGAAQYLLQQGYDVVYSIDGGFEAWQRQFPAEVAYGA.

The region spanning 17–105 (QEKEAVLVDI…WQRQFPAEVA (89 aa)) is the Rhodanese domain. C65 (cysteine persulfide intermediate) is an active-site residue.

The protein belongs to the GlpE family.

It localises to the cytoplasm. It catalyses the reaction thiosulfate + hydrogen cyanide = thiocyanate + sulfite + 2 H(+). The catalysed reaction is thiosulfate + [thioredoxin]-dithiol = [thioredoxin]-disulfide + hydrogen sulfide + sulfite + 2 H(+). Its function is as follows. Transferase that catalyzes the transfer of sulfur from thiosulfate to thiophilic acceptors such as cyanide or dithiols. May function in a CysM-independent thiosulfate assimilation pathway by catalyzing the conversion of thiosulfate to sulfite, which can then be used for L-cysteine biosynthesis. This chain is Thiosulfate sulfurtransferase GlpE, found in Escherichia coli O139:H28 (strain E24377A / ETEC).